We begin with the raw amino-acid sequence, 129 residues long: DNA base-flipping protein (129 aa).

The protein belongs to the MGMT family. ATL subfamily. Interacts with HelD and UvrA.

In terms of biological role, involved in DNA damage recognition. Binds DNA containing O(6)-methylguanine and larger O(6)-alkylguanine adducts, and to double-stranded DNA that contains an AP (apurinic/apyrimidinic) site. Binds to the damaged base and flips the base out of the DNA duplex into an extrahelical conformation, which allows processing by repair proteins. Works in partnership with the nucleotide excision repair (NER) pathway to enhance the repair of the O(6)-alkylguanine adducts larger than the methyl adduct. Also prevents methyl-directed mismatch repair (MMR)-mediated attack of the O(6)-alkylguanine:T mispairs for the larger alkyl groups. The chain is DNA base-flipping protein from Escherichia coli (strain K12).